Here is a 125-residue protein sequence, read N- to C-terminus: Glycine cleavage system H protein (125 aa).

The Lipoyl-binding domain maps to 22 to 104 (SYVIGITDFA…YDTGWILKLE (83 aa)). Residue lysine 63 is modified to N6-lipoyllysine.

This sequence belongs to the GcvH family. In terms of assembly, the glycine cleavage system is composed of four proteins: P, T, L and H. It depends on (R)-lipoate as a cofactor.

Functionally, the glycine cleavage system catalyzes the degradation of glycine. The H protein shuttles the methylamine group of glycine from the P protein to the T protein. Is also involved in protein lipoylation via its role as an octanoyl/lipoyl carrier protein intermediate. In Listeria monocytogenes serotype 4b (strain CLIP80459), this protein is Glycine cleavage system H protein.